Reading from the N-terminus, the 356-residue chain is C-C chemokine receptor 1-like protein 1 (356 aa).

Residues 1 to 32 lie on the Extracellular side of the membrane; sequence MEIPAVTEPSYNTVAKNDFMSGFLCFSINVRA. The chain crosses the membrane as a helical span at residues 33-60; that stretch reads FGITVLTPLYSLVFIIGVIGHVLVVLVL. Residues 61-67 lie on the Cytoplasmic side of the membrane; the sequence is IQHKRLR. Residues 68–92 form a helical membrane-spanning segment; that stretch reads NMTSIYLFNLAISDLVFLSTLPFWV. Over 93–108 the chain is Extracellular; sequence DYIMKGDWIFGNAMCK. A disulfide bridge links Cys107 with Cys184. A helical transmembrane segment spans residues 109–130; it reads FVSGFYYLGLYSDMFFITLLTI. The Cytoplasmic portion of the chain corresponds to 131–147; that stretch reads DRYLAVVHVVFALRART. The helical transmembrane segment at 148–172 threads the bilayer; it reads VTFGIISSIITWVLAALVSIPCLYV. Residues 173-198 are Extracellular-facing; it reads FKSQMEFTYHTCRAILPRKSLIRFLR. Residues 199–224 traverse the membrane as a helical segment; sequence FQALTMNILGLILPLLAMIICYTRII. The Cytoplasmic segment spans residues 225 to 240; sequence NVLHRRPNKKKAKVMR. Residues 241–265 traverse the membrane as a helical segment; the sequence is LIFVITLLFFLLLAPYYLAAFVSAF. Over 266–282 the chain is Extracellular; that stretch reads EDVLFTPSCLRSQQVDL. Residues 283–306 form a helical membrane-spanning segment; that stretch reads SLMITEALAYTHCCVNPVIYVFVG. The Cytoplasmic portion of the chain corresponds to 307–356; the sequence is KRFRKYLWQLFRRHTAITLPQWLPFLSVDRAQRASATPPSTVEIETSADL.

Belongs to the G-protein coupled receptor 1 family. In terms of tissue distribution, detected in the spleen, liver and leukocytes.

It localises to the cell membrane. Functionally, probable receptor for a C-C type chemokine. This Mus musculus (Mouse) protein is C-C chemokine receptor 1-like protein 1 (Ccr1l1).